We begin with the raw amino-acid sequence, 150 residues long: 3-hydroxyacyl-[acyl-carrier-protein] dehydratase FabZ (150 aa).

The active site involves H47.

The protein belongs to the thioester dehydratase family. FabZ subfamily.

The protein localises to the cytoplasm. It carries out the reaction a (3R)-hydroxyacyl-[ACP] = a (2E)-enoyl-[ACP] + H2O. Its function is as follows. Involved in unsaturated fatty acids biosynthesis. Catalyzes the dehydration of short chain beta-hydroxyacyl-ACPs and long chain saturated and unsaturated beta-hydroxyacyl-ACPs. The sequence is that of 3-hydroxyacyl-[acyl-carrier-protein] dehydratase FabZ from Verminephrobacter eiseniae (strain EF01-2).